A 582-amino-acid chain; its full sequence is Formate--tetrahydrofolate ligase (582 aa).

T65–T72 serves as a coordination point for ATP.

The protein belongs to the formate--tetrahydrofolate ligase family.

The enzyme catalyses (6S)-5,6,7,8-tetrahydrofolate + formate + ATP = (6R)-10-formyltetrahydrofolate + ADP + phosphate. It participates in one-carbon metabolism; tetrahydrofolate interconversion. In Vibrio campbellii (strain ATCC BAA-1116), this protein is Formate--tetrahydrofolate ligase.